The sequence spans 432 residues: Alpha-enolase (432 aa).

Serine 40 is a binding site for Mg(2+). Substrate contacts are provided by histidine 158 and glutamate 167. The Proton donor role is filled by glutamate 210. Mg(2+)-binding residues include aspartate 245, glutamate 293, and aspartate 318. 2 residues coordinate substrate: glutamate 293 and aspartate 318. Residue lysine 343 is the Proton acceptor of the active site. Substrate is bound by residues 370 to 373 and lysine 394; that span reads SHRS.

It belongs to the enolase family. In terms of assembly, dimer. Requires Mg(2+) as cofactor.

It is found in the cytoplasm. It carries out the reaction (2R)-2-phosphoglycerate = phosphoenolpyruvate + H2O. It participates in carbohydrate degradation; glycolysis; pyruvate from D-glyceraldehyde 3-phosphate: step 4/5. Functionally, multifunctional enzyme that, as well as its role in glycolysis, plays a part in various processes such as growth control, hypoxia tolerance and allergic responses. The polypeptide is Alpha-enolase (Thunnus albacares (Yellowfin tuna)).